Reading from the N-terminus, the 434-residue chain is Gamma-enolase (434 aa).

Position 2 is an N-acetylserine (serine 2). Lysine 5 bears the N6-acetyllysine mark. Threonine 26 carries the post-translational modification Phosphothreonine. Serine 40 serves as a coordination point for Mg(2+). Tyrosine 44 bears the Phosphotyrosine mark. An N6-acetyllysine; alternate modification is found at lysine 60. Lysine 60 is modified (N6-succinyllysine; alternate). Lysine 64 carries the post-translational modification N6-acetyllysine. The residue at position 89 (lysine 89) is an N6-acetyllysine; alternate. Lysine 89 is subject to N6-succinyllysine; alternate. The substrate site is built by histidine 158 and glutamate 167. 3 positions are modified to N6-acetyllysine: lysine 193, lysine 197, and lysine 199. Lysine 202 is subject to N6-acetyllysine; alternate. Residue lysine 202 forms a Glycyl lysine isopeptide (Lys-Gly) (interchain with G-Cter in SUMO2); alternate linkage. Glutamate 210 (proton donor) is an active-site residue. Lysine 228 and lysine 233 each carry N6-acetyllysine; alternate. Lysine 228 carries the N6-succinyllysine; alternate modification. An N6-(2-hydroxyisobutyryl)lysine; alternate modification is found at lysine 233. Aspartate 245 lines the Mg(2+) pocket. Lysine 256 carries the post-translational modification N6-acetyllysine. Serine 263 bears the Phosphoserine mark. Tyrosine 287 carries the post-translational modification Phosphotyrosine. A Phosphoserine modification is found at serine 291. Glutamate 293 and aspartate 318 together coordinate Mg(2+). Residues glutamate 293 and aspartate 318 each coordinate substrate. 2 positions are modified to N6-acetyllysine: lysine 335 and lysine 343. The active-site Proton acceptor is the lysine 343. Substrate is bound by residues 370–373 (SHRS) and lysine 394. An N6-acetyllysine modification is found at lysine 406.

Belongs to the enolase family. As to quaternary structure, mammalian enolase is composed of 3 isozyme subunits, alpha, beta and gamma, which can form homodimers or heterodimers which are cell-type and development-specific. Mg(2+) is required as a cofactor. The alpha/alpha homodimer is expressed in embryo and in most adult tissues. The alpha/beta heterodimer and the beta/beta homodimer are found in striated muscle, and the alpha/gamma heterodimer and the gamma/gamma homodimer in neurons.

Its subcellular location is the cytoplasm. The protein resides in the cell membrane. The catalysed reaction is (2R)-2-phosphoglycerate = phosphoenolpyruvate + H2O. The protein operates within carbohydrate degradation; glycolysis; pyruvate from D-glyceraldehyde 3-phosphate: step 4/5. Its function is as follows. Has neurotrophic and neuroprotective properties on a broad spectrum of central nervous system (CNS) neurons. Binds, in a calcium-dependent manner, to cultured neocortical neurons and promotes cell survival. The protein is Gamma-enolase (ENO2) of Homo sapiens (Human).